A 248-amino-acid chain; its full sequence is Large ribosomal subunit protein uL4 (248 aa).

Disordered stretches follow at residues 72–103 (RSENVARRVPNAVSGRAAHPPKAEKDQTKSLN) and 173–210 (GRSVRAGRGKTRGRKYSQPKSVLVVTSEEPSRAARNLS). Residues 92 to 103 (PKAEKDQTKSLN) show a composition bias toward basic and acidic residues. The span at 177–189 (RAGRGKTRGRKYS) shows a compositional bias: basic residues.

The protein belongs to the universal ribosomal protein uL4 family. In terms of assembly, part of the 50S ribosomal subunit.

Functionally, one of the primary rRNA binding proteins, this protein initially binds near the 5'-end of the 23S rRNA. It is important during the early stages of 50S assembly. It makes multiple contacts with different domains of the 23S rRNA in the assembled 50S subunit and ribosome. Its function is as follows. Forms part of the polypeptide exit tunnel. In Halorubrum lacusprofundi (strain ATCC 49239 / DSM 5036 / JCM 8891 / ACAM 34), this protein is Large ribosomal subunit protein uL4.